We begin with the raw amino-acid sequence, 735 residues long: Transcription factor RFX4 (735 aa).

The disordered stretch occupies residues 25–59 (SESKRFSSHSSIGNISNDENEEKENNRASKPHSTP). A DNA-binding region spans residues 44-126 (NEEKENNRAS…RRLGTRGQSK (83 aa)). The segment at residues 61-136 (TLQWLEENYE…YHYYGIAVKE (76 aa)) is a DNA-binding region (RFX-type winged-helix). The segment at 315 to 487 (RFSQILKRQT…NELMRAMKGE (173 aa)) is necessary for dimerization.

The protein belongs to the RFX family.

Its subcellular location is the nucleus. May activate transcription by interacting directly with the X-box. This is Transcription factor RFX4 (rfx4) from Danio rerio (Zebrafish).